An 804-amino-acid polypeptide reads, in one-letter code: Elongation factor G, mitochondrial (804 aa).

A mitochondrion-targeting transit peptide spans 1-63 (MSMHRVARAV…RHFSQSPIIR (63 aa)). Positions 99–385 (RRVRNIGIAA…AVCDYLPNPA (287 aa)) constitute a tr-type G domain. GTP-binding positions include 108-115 (AHIDSGKT), 183-187 (DTPGH), and 237-240 (NKMD).

Belongs to the TRAFAC class translation factor GTPase superfamily. Classic translation factor GTPase family. EF-G/EF-2 subfamily.

Its subcellular location is the mitochondrion. It functions in the pathway protein biosynthesis; polypeptide chain elongation. Its function is as follows. Mitochondrial GTPase that catalyzes the GTP-dependent ribosomal translocation step during translation elongation. During this step, the ribosome changes from the pre-translocational (PRE) to the post-translocational (POST) state as the newly formed A-site-bound peptidyl-tRNA and P-site-bound deacylated tRNA move to the P and E sites, respectively. Catalyzes the coordinated movement of the two tRNA molecules, the mRNA and conformational changes in the ribosome. The sequence is that of Elongation factor G, mitochondrial (mef1) from Botryotinia fuckeliana (strain B05.10) (Noble rot fungus).